Consider the following 192-residue polypeptide: MAGLLALLGPAGRVGARVRPRATWLLGATAPCAPPPLALALLPPRLDARLLRTARGDCRGHQDPSQATGTTGSSVSCTEEKKQSKSQQLKKIFQEYGTVGVSLHIGISLISLGIFYMVVSSGVDMPAILLKLGFKESLVQSKMAAGTSTFVVAYAIHKLFAPVRISITLVSVPLIVRYFRKVGFFKPPAAKP.

Residues 1 to 58 (MAGLLALLGPAGRVGARVRPRATWLLGATAPCAPPPLALALLPPRLDARLLRTARGDC) constitute a mitochondrion transit peptide. The disordered stretch occupies residues 57-80 (DCRGHQDPSQATGTTGSSVSCTEE). Over residues 63–77 (DPSQATGTTGSSVSC) the composition is skewed to polar residues. The DUF1279 domain occupies 80–191 (EKKQSKSQQL…VGFFKPPAAK (112 aa)). 2 helical membrane-spanning segments follow: residues 99–119 (VGVS…YMVV) and 150–170 (FVVA…ITLV).

Belongs to the FAM210 family. Expressed in late erythroblast differentiation stages. Underexpressed in ovarian cancer epithelia cells compared with normal human ovarian surface epithelia.

Its subcellular location is the mitochondrion. It is found in the mitochondrion outer membrane. Its function is as follows. Plays a role in erythroid differentiation. Involved in cell proliferation and tumor cell growth suppression. Involved in the metabolic reprogramming of cancer cells in a PDK4-dependent manner. This chain is Protein FAM210B, mitochondrial, found in Homo sapiens (Human).